The primary structure comprises 195 residues: Protein GrpE (195 aa).

The span at 1 to 20 (MSSKEQKTPDEQVLDQKEAA) shows a compositional bias: basic and acidic residues. Residues 1–40 (MSSKEQKTPDEQVLDQKEAAKGQQADAAPETADVADPRDA) are disordered.

It belongs to the GrpE family. Homodimer.

It localises to the cytoplasm. Its function is as follows. Participates actively in the response to hyperosmotic and heat shock by preventing the aggregation of stress-denatured proteins, in association with DnaK and GrpE. It is the nucleotide exchange factor for DnaK and may function as a thermosensor. Unfolded proteins bind initially to DnaJ; upon interaction with the DnaJ-bound protein, DnaK hydrolyzes its bound ATP, resulting in the formation of a stable complex. GrpE releases ADP from DnaK; ATP binding to DnaK triggers the release of the substrate protein, thus completing the reaction cycle. Several rounds of ATP-dependent interactions between DnaJ, DnaK and GrpE are required for fully efficient folding. This Pectobacterium carotovorum subsp. carotovorum (strain PC1) protein is Protein GrpE.